A 184-amino-acid chain; its full sequence is Alpha-tubulin N-acetyltransferase (184 aa).

In terms of domain architecture, N-acetyltransferase spans methionine 1–phenylalanine 170. Residues phenylalanine 104 to isoleucine 117 and serine 140 to lysine 149 contribute to the acetyl-CoA site.

This sequence belongs to the acetyltransferase ATAT1 family.

The enzyme catalyses L-lysyl-[alpha-tubulin] + acetyl-CoA = N(6)-acetyl-L-lysyl-[alpha-tubulin] + CoA + H(+). In terms of biological role, specifically acetylates 'Lys-40' in alpha-tubulin on the lumenal side of microtubules. Promotes microtubule destabilization and accelerates microtubule dynamics; this activity may be independent of acetylation activity. Acetylates alpha-tubulin with a slow enzymatic rate, due to a catalytic site that is not optimized for acetyl transfer. Enters the microtubule through each end and diffuses quickly throughout the lumen of microtubules. Acetylates only long/old microtubules because of its slow acetylation rate since it does not have time to act on dynamically unstable microtubules before the enzyme is released. The sequence is that of Alpha-tubulin N-acetyltransferase from Plasmodium falciparum (isolate 3D7).